Here is a 91-residue protein sequence, read N- to C-terminus: Large ribosomal subunit protein bL31B (91 aa).

This sequence belongs to the bacterial ribosomal protein bL31 family. Type B subfamily. In terms of assembly, part of the 50S ribosomal subunit.

The chain is Large ribosomal subunit protein bL31B from Neisseria meningitidis serogroup B (strain ATCC BAA-335 / MC58).